We begin with the raw amino-acid sequence, 95 residues long: Protein NCBP2AS2 homolog (95 aa).

This Ixodes scapularis (Black-legged tick) protein is Protein NCBP2AS2 homolog.